Here is a 455-residue protein sequence, read N- to C-terminus: Keratin, type I cuticular Ha5 (455 aa).

Positions 1–97 are head; it reads MASKCLKAGF…FGEGILTGNE (97 aa). Residues 97 to 408 form the IF rod domain; sequence EKETMQSLND…GLLESEDSKL (312 aa). The coil 1A stretch occupies residues 98–132; that stretch reads KETMQSLNDRLAGYLEKVRQLEQENASLESRIREW. Residues 133-143 are linker 1; it reads CEQQVPYMCPD. The tract at residues 144 to 244 is coil 1B; that stretch reads YQSYFRTIEE…HEEEVNSLRC (101 aa). Residues 245-260 are linker 12; it reads QLGDRLNVEVDAAPPV. Positions 261 to 404 are coil 2; sequence DLNRVLEEMR…NTYRGLLESE (144 aa). A tail region spans residues 405 to 455; sequence DSKLPCNPCAPDYSPSKSCLPCLPAASCGPSAARTNCSPRPICVPCPGGRF.

The protein belongs to the intermediate filament family. As to expression, early expression in the hair follicle, mainly found in supramatricial cells and lowermost cortical cells of the hair bulb.

The sequence is that of Keratin, type I cuticular Ha5 (KRT35) from Homo sapiens (Human).